A 50-amino-acid chain; its full sequence is Inter-alpha-trypsin inhibitor heavy chain H2 (50 aa).

Belongs to the ITIH family. As to quaternary structure, I-alpha-I plasma protease inhibitors are assembled from one or two heavy chains (HC) and one light chain, bikunin. Inter-alpha-inhibitor (I-alpha-I) is composed of ITIH1/HC1, ITIH2/HC2 and bikunin. Phosphorylated by FAM20C in the extracellular medium.

It localises to the secreted. In terms of biological role, may act as a carrier of hyaluronan in serum or as a binding protein between hyaluronan and other matrix protein, including those on cell surfaces in tissues to regulate the localization, synthesis and degradation of hyaluronan which are essential to cells undergoing biological processes. The protein is Inter-alpha-trypsin inhibitor heavy chain H2 (ITIH2) of Bos taurus (Bovine).